Consider the following 883-residue polypeptide: Probable valine--tRNA ligase, cytoplasmic (883 aa).

Residues 1–23 show a composition bias toward basic and acidic residues; sequence MTLKMDRKALKEEKKKQKLEKFL. Residues 1-49 form a disordered region; that stretch reads MTLKMDRKALKEEKKKQKLEKFLNKKTTQSKISKAPKPAKNKSSSGYDP. The span at 30 to 45 shows a compositional bias: low complexity; that stretch reads SKISKAPKPAKNKSSS. The 'HIGH' region signature appears at 82 to 92; it reads PNITGSLHIGH. The 'KMSKS' region signature appears at 586–590; sequence KMSKS. Lys-589 contributes to the ATP binding site.

Belongs to the class-I aminoacyl-tRNA synthetase family.

It localises to the cytoplasm. It catalyses the reaction tRNA(Val) + L-valine + ATP = L-valyl-tRNA(Val) + AMP + diphosphate. The polypeptide is Probable valine--tRNA ligase, cytoplasmic (Vairimorpha ceranae (strain BRL01) (Microsporidian parasite)).